The chain runs to 295 residues: GTPase Era (295 aa).

The 168-residue stretch at 4 to 171 folds into the Era-type G domain; sequence KSGFVTIIGR…INLIVQYLPE (168 aa). The segment at 12 to 19 is G1; it reads GRPNVGKS. 12 to 19 is a GTP binding site; that stretch reads GRPNVGKS. Residues 38 to 42 are G2; it reads QTTRN. A G3 region spans residues 59–62; sequence DTPG. Residues 59–63 and 121–124 each bind GTP; these read DTPGI and NKID. The interval 121–124 is G4; it reads NKID. The segment at 150–152 is G5; that stretch reads ISA. The region spanning 194–280 is the KH type-2 domain; it reads IREKILHYTD…YLELWVKVKE (87 aa).

Belongs to the TRAFAC class TrmE-Era-EngA-EngB-Septin-like GTPase superfamily. Era GTPase family. In terms of assembly, monomer.

It is found in the cytoplasm. The protein resides in the cell membrane. Functionally, an essential GTPase that binds both GDP and GTP, with rapid nucleotide exchange. Plays a role in 16S rRNA processing and 30S ribosomal subunit biogenesis and possibly also in cell cycle regulation and energy metabolism. This is GTPase Era from Alkaliphilus oremlandii (strain OhILAs) (Clostridium oremlandii (strain OhILAs)).